Consider the following 359-residue polypeptide: MKPSIYSLTRDELIEWAVERGQKQFRATQIWDWLYKKRVQSFEEMTNISKDFVSILNDSFCVNPLKQRVVQESADGTVKYLFELPDGMLIETVLMRQHYGHSVCVTTQVGCNIGCTFCASGLIKKQRDLNSGEITAQIMLVQKYFDDRKQGERVSHVVVMGIGEPFDNYKNVMCFLRVINDDNGLAIGARHITVSTSGLAHKIRDFANEGVQVNLAVSLHAPNNDLRSSIMRVNRSFPLEKLFSAIEYYIEKTNRRVTFEYIMLNEVNDSIKQAQELADLTKTIRKLSYVNLIPYNPVSEHDQYSRSPKERVLAFYDVLKKNGVNCVVRQEHGTDIDAACGQLRSKTMKKDREKVTATK.

Glu91 (proton acceptor) is an active-site residue. In terms of domain architecture, Radical SAM core spans 97–329 (QHYGHSVCVT…KKNGVNCVVR (233 aa)). Cys104 and Cys340 are disulfide-bonded. Residues Cys111, Cys115, and Cys118 each coordinate [4Fe-4S] cluster. S-adenosyl-L-methionine-binding positions include 163-164 (GE), Ser195, 218-220 (SLH), and Asn296. The active-site S-methylcysteine intermediate is Cys340.

This sequence belongs to the radical SAM superfamily. RlmN family. Requires [4Fe-4S] cluster as cofactor.

It localises to the cytoplasm. The enzyme catalyses adenosine(2503) in 23S rRNA + 2 reduced [2Fe-2S]-[ferredoxin] + 2 S-adenosyl-L-methionine = 2-methyladenosine(2503) in 23S rRNA + 5'-deoxyadenosine + L-methionine + 2 oxidized [2Fe-2S]-[ferredoxin] + S-adenosyl-L-homocysteine. The catalysed reaction is adenosine(37) in tRNA + 2 reduced [2Fe-2S]-[ferredoxin] + 2 S-adenosyl-L-methionine = 2-methyladenosine(37) in tRNA + 5'-deoxyadenosine + L-methionine + 2 oxidized [2Fe-2S]-[ferredoxin] + S-adenosyl-L-homocysteine. Its function is as follows. Specifically methylates position 2 of adenine 2503 in 23S rRNA and position 2 of adenine 37 in tRNAs. In Streptococcus pyogenes serotype M2 (strain MGAS10270), this protein is Probable dual-specificity RNA methyltransferase RlmN.